The following is a 159-amino-acid chain: MSTEMMTTEPVPPLELSDDILGKLDPQCSPSDDLSDQFIKDCDLKKKPRKGKNVQATLNVESDQKKPRRKDTPAVHIPPFIPGVISEHLIKRYDVQERIPKAKSGPALHNSDMEQKRPRRKDTPALHMPPFVAGLTLLRDESAGVILEDEEMDGDKLAI.

2 disordered regions span residues 1–79 (MSTE…HIPP) and 98–127 (RIPK…PALH). Basic and acidic residues-rich tracts occupy residues 62-73 (SDQKKPRRKDTP) and 111-124 (SDME…KDTP). T72 and T123 each carry phosphothreonine; by PKG/PRKG1.

In terms of processing, substrate for cGMP-dependent protein kinase. Phosphorylation of Thr-72 and Thr-123 is required for its phosphatase activity. Phosphorylated by PRKG1 isoform alpha. Expressed in Purkinje cells of the cerebellum, hippocampus, pons, medulla and eye.

Its function is as follows. Inhibits phosphatase activities of protein phosphatase 1 (PP1) and protein phosphatase 2A (PP2A) complexes. This is Protein phosphatase 1 regulatory subunit 17 (Ppp1r17) from Mus musculus (Mouse).